Here is a 269-residue protein sequence, read N- to C-terminus: Gem-associated protein 2 (269 aa).

Serine 70 and serine 155 each carry phosphoserine.

This sequence belongs to the gemin-2 family. As to quaternary structure, monomer. Part of the core SMN complex that contains SMN1, GEMIN2/SIP1, DDX20/GEMIN3, GEMIN4, GEMIN5, GEMIN6, GEMIN7, GEMIN8 and STRAP/UNRIP. Part of the SMN-Sm complex that contains SMN1, GEMIN2/SIP1, DDX20/GEMIN3, GEMIN4, GEMIN5, GEMIN6, GEMIN7, GEMIN8, STRAP/UNRIP and the Sm proteins SNRPB, SNRPD1, SNRPD2, SNRPD3, SNRPE, SNRPF and SNRPG. Interacts with GEMIN5; the interaction is direct. Interacts (via C-terminus) with SMN1; the interaction is direct. Interacts with SNRPD1; the interaction is direct. Interacts with SNRPD2; the interaction is direct. Interacts (via N-terminus) with SNRPF; the interaction is direct. Interacts (via N-terminus) with SNRPE; the interaction is direct. Interacts (via N-terminus) with SNRPG; the interaction is direct.

Its subcellular location is the nucleus. The protein resides in the gem. It is found in the cytoplasm. Its function is as follows. The SMN complex catalyzes the assembly of small nuclear ribonucleoproteins (snRNPs), the building blocks of the spliceosome, and thereby plays an important role in the splicing of cellular pre-mRNAs. Most spliceosomal snRNPs contain a common set of Sm proteins SNRPB, SNRPD1, SNRPD2, SNRPD3, SNRPE, SNRPF and SNRPG that assemble in a heptameric protein ring on the Sm site of the small nuclear RNA to form the core snRNP (Sm core). In the cytosol, the Sm proteins SNRPD1, SNRPD2, SNRPE, SNRPF and SNRPG (5Sm) are trapped in an inactive 6S pICln-Sm complex by the chaperone CLNS1A that controls the assembly of the core snRNP. To assemble core snRNPs, the SMN complex accepts the trapped 5Sm proteins from CLNS1A. Binding of snRNA inside 5Sm ultimately triggers eviction of the SMN complex, thereby allowing binding of SNRPD3 and SNRPB to complete assembly of the core snRNP. Within the SMN complex, GEMIN2 constrains the conformation of 5Sm, thereby promoting 5Sm binding to snRNA containing the snRNP code (a nonameric Sm site and a 3'-adjacent stem-loop), thus preventing progression of assembly until a cognate substrate is bound. In Mus musculus (Mouse), this protein is Gem-associated protein 2.